Consider the following 63-residue polypeptide: Large ribosomal subunit protein bL28 (63 aa).

It belongs to the bacterial ribosomal protein bL28 family.

The sequence is that of Large ribosomal subunit protein bL28 from Heliobacterium modesticaldum (strain ATCC 51547 / Ice1).